The following is a 451-amino-acid chain: Trigger factor (451 aa).

Residues 165 to 250 form the PPIase FKBP-type domain; that stretch reads DDKLTIDFEG…LHQIQVREAL (86 aa).

The protein belongs to the FKBP-type PPIase family. Tig subfamily.

The protein localises to the cytoplasm. The catalysed reaction is [protein]-peptidylproline (omega=180) = [protein]-peptidylproline (omega=0). Its function is as follows. Involved in protein export. Acts as a chaperone by maintaining the newly synthesized protein in an open conformation. Functions as a peptidyl-prolyl cis-trans isomerase. The protein is Trigger factor of Helicobacter pylori (strain P12).